The primary structure comprises 1242 residues: Protein STU1 (1242 aa).

Composition is skewed to low complexity over residues leucine 138–lysine 156 and alanine 548–alanine 567. Disordered stretches follow at residues leucine 138–glutamate 161, lysine 538–phenylalanine 612, histidine 637–glycine 711, alanine 748–isoleucine 839, alanine 853–alanine 884, and histidine 1077–threonine 1111. Residues lysine 574–glycine 593 are compositionally biased toward basic and acidic residues. 2 stretches are compositionally biased toward low complexity: residues threonine 640–proline 660 and serine 701–glycine 711. A compositionally biased stretch (basic and acidic residues) spans alanine 748–glycine 767. Polar residues-rich tracts occupy residues glutamine 802 to valine 815, alanine 824 to glycine 837, and threonine 856 to isoleucine 871. Low complexity predominate over residues serine 1082–lysine 1104.

The protein belongs to the CLASP family. As to quaternary structure, interacts with microtubules.

It localises to the cytoplasm. The protein localises to the cytoskeleton. It is found in the nucleus. The protein resides in the spindle. Microtubule binding protein that promotes the stabilization of dynamic microtubules. Required for mitotic spindle formation. This is Protein STU1 (STU1) from Cryptococcus neoformans var. neoformans serotype D (strain B-3501A) (Filobasidiella neoformans).